A 338-amino-acid chain; its full sequence is (-)-alpha-amorphene synthase ((2E,6E)-farnesyl diphosphate cyclizing) (338 aa).

Residues Asp-105 and Glu-109 each coordinate Mg(2+). The DDXXE motif signature appears at 105 to 109 (DDRAE). Arg-196 provides a ligand contact to substrate. Position 246 (Ser-246) interacts with Mg(2+). Lys-249 serves as a coordination point for substrate. Glu-250 contributes to the Mg(2+) binding site. 327–328 (RY) is a binding site for substrate.

Belongs to the terpene synthase family. The cofactor is Mg(2+).

The catalysed reaction is (2E,6E)-farnesyl diphosphate = (-)-alpha-amorphene + diphosphate. It participates in secondary metabolite biosynthesis; terpenoid biosynthesis. In terms of biological role, catalyzes the conversion of (2E,6E)-farnesyl diphosphate (FPP) to yield the bicyclic sesquiterpene (1R,6S,7S)-(-)-alpha-amorphene via a probable 1,6-cyclization, which could involve the abstraction of the pyrophosphate from FPP to yield a (R)-bisabolyl cation. The only accepted substrate is (2E,6E)-farnesyl diphosphate (FPP). This is (-)-alpha-amorphene synthase ((2E,6E)-farnesyl diphosphate cyclizing) from Streptomyces viridochromogenes (strain DSM 40736 / JCM 4977 / BCRC 1201 / Tue 494).